Consider the following 164-residue polypeptide: UPF0304 protein YfbU (164 aa).

This sequence belongs to the UPF0304 family.

This is UPF0304 protein YfbU from Escherichia coli O127:H6 (strain E2348/69 / EPEC).